The following is a 673-amino-acid chain: Zinc finger and BTB domain-containing protein 16 (673 aa).

Residues 34–96 (CDVVIMVDSQ…AYTATLQAKA (63 aa)) enclose the BTB domain. Phosphoserine; by PDPK1 occurs at positions 76, 184, and 197. Residues 200 to 300 (KAAVDSLMTI…SARELHYGRE (101 aa)) form an interaction with RUNX1T1 region. 2 disordered regions span residues 215-236 (QGTL…GRHP) and 249-332 (DEVP…KHLG). Phosphoserine; by PDPK1 is present on serine 256. Phosphothreonine; by PDPK1 is present on threonine 282. 2 stretches are compositionally biased toward basic and acidic residues: residues 293 to 302 (RELHYGREES) and 319 to 331 (RPEH…EKHL). 8 C2H2-type zinc fingers span residues 404 to 426 (EQCS…RKLH), 432 to 454 (YGCE…LLAH), 461 to 483 (FVCD…RQTH), 490 to 512 (VFCL…MEVH), 518 to 540 (YICS…LRSH), 546 to 568 (YECE…KRIH), 574 to 596 (YECN…YRVH), and 602 to 624 (FECK…LRTH). Serine 628 carries the phosphoserine; by PDPK1 modification. The C2H2-type 9 zinc-finger motif lies at 630–652 (YQCTICTEYCPSLSSMQKHMKGH).

Belongs to the krueppel C2H2-type zinc-finger protein family. Binds EPN1. Interacts with ZBTB32 and CUL3. Interacts with ATP7B. Interacts with transcriptional corepressor RUNX1T1 (via its N-terminus); the interaction increases the transcription repression activity of ZBTB16. Interacts (via C2H2-type zinc finger domains 1 and 2) with RNF112. In terms of tissue distribution, within the hematopoietic system, PLZF is expressed in bone marrow, early myeloid cell lines and peripheral blood mononuclear cells. Also expressed in the ovary, and at lower levels, in the kidney and lung.

The protein resides in the nucleus. It localises to the nuclear body. It participates in protein modification; protein ubiquitination. In terms of biological role, acts as a transcriptional repressor. Transcriptional repression may be mediated through recruitment of histone deacetylases to target promoters. May play a role in myeloid maturation and in the development and/or maintenance of other differentiated tissues. Probable substrate-recognition component of an E3 ubiquitin-protein ligase complex which mediates the ubiquitination and subsequent proteasomal degradation of target proteins. The chain is Zinc finger and BTB domain-containing protein 16 (ZBTB16) from Homo sapiens (Human).